Consider the following 161-residue polypeptide: Afimbrial adhesin AFA-I (161 aa).

A signal peptide spans 1 to 21 (MKKLAIIGATSVMMMTGTAQA).

This sequence belongs to the Dr-adhesin family.

Its subcellular location is the fimbrium. In terms of biological role, hemagglutinins of uropathogenic E.coli mediate adherence to the upper urinary tract. These adhesins bind to the Dr blood group antigen and also agglutinate human erythrocytes in the presence of D-mannose (mannose-resistant hemagglutination (MRHA)). This chain is Afimbrial adhesin AFA-I (afaE1), found in Escherichia coli.